The following is a 202-amino-acid chain: UPF0301 protein ML0028 (202 aa).

Belongs to the UPF0301 (AlgH) family.

The polypeptide is UPF0301 protein ML0028 (Mycobacterium leprae (strain TN)).